A 503-amino-acid polypeptide reads, in one-letter code: Maturase K (503 aa).

Belongs to the intron maturase 2 family. MatK subfamily.

The protein resides in the plastid. It localises to the chloroplast. Usually encoded in the trnK tRNA gene intron. Probably assists in splicing its own and other chloroplast group II introns. In Diospyros virginiana (American persimmon), this protein is Maturase K.